The following is a 333-amino-acid chain: Phosphoribosylformylglycinamidine cyclo-ligase (333 aa).

Belongs to the AIR synthase family.

The protein localises to the cytoplasm. The catalysed reaction is 2-formamido-N(1)-(5-O-phospho-beta-D-ribosyl)acetamidine + ATP = 5-amino-1-(5-phospho-beta-D-ribosyl)imidazole + ADP + phosphate + H(+). It functions in the pathway purine metabolism; IMP biosynthesis via de novo pathway; 5-amino-1-(5-phospho-D-ribosyl)imidazole from N(2)-formyl-N(1)-(5-phospho-D-ribosyl)glycinamide: step 2/2. This is Phosphoribosylformylglycinamidine cyclo-ligase from Methanosarcina acetivorans (strain ATCC 35395 / DSM 2834 / JCM 12185 / C2A).